A 263-amino-acid chain; its full sequence is 3-deoxy-manno-octulosonate cytidylyltransferase 1 (263 aa).

This sequence belongs to the KdsB family.

The protein localises to the cytoplasm. It catalyses the reaction 3-deoxy-alpha-D-manno-oct-2-ulosonate + CTP = CMP-3-deoxy-beta-D-manno-octulosonate + diphosphate. The protein operates within nucleotide-sugar biosynthesis; CMP-3-deoxy-D-manno-octulosonate biosynthesis; CMP-3-deoxy-D-manno-octulosonate from 3-deoxy-D-manno-octulosonate and CTP: step 1/1. It functions in the pathway bacterial outer membrane biogenesis; lipopolysaccharide biosynthesis. Functionally, activates KDO (a required 8-carbon sugar) for incorporation into bacterial lipopolysaccharide in Gram-negative bacteria. This chain is 3-deoxy-manno-octulosonate cytidylyltransferase 1, found in Burkholderia ambifaria (strain MC40-6).